The primary structure comprises 349 residues: Bifunctional protein FolKE (349 aa).

Residues 1–226 form a 2-amino-4-hydroxy-6-hydroxymethyldihydropteridine pyrophosphokinase region; it reads MQTTYLSMGS…LFEIDSSKTD (226 aa). A GTP cyclohydrolase 1 region spans residues 226 to 349; it reads DSIVLIKDIP…KRMEFLESLL (124 aa).

The protein in the N-terminal section; belongs to the HPPK family. In the C-terminal section; belongs to the GTP cyclohydrolase I family. As to quaternary structure, homomer.

It catalyses the reaction 6-hydroxymethyl-7,8-dihydropterin + ATP = (7,8-dihydropterin-6-yl)methyl diphosphate + AMP + H(+). The enzyme catalyses GTP + H2O = 7,8-dihydroneopterin 3'-triphosphate + formate + H(+). It participates in cofactor biosynthesis; 7,8-dihydroneopterin triphosphate biosynthesis; 7,8-dihydroneopterin triphosphate from GTP: step 1/1. The protein operates within cofactor biosynthesis; tetrahydrofolate biosynthesis; 2-amino-4-hydroxy-6-hydroxymethyl-7,8-dihydropteridine diphosphate from 7,8-dihydroneopterin triphosphate: step 4/4. The chain is Bifunctional protein FolKE (folKE) from Lactococcus lactis subsp. lactis (strain IL1403) (Streptococcus lactis).